The chain runs to 260 residues: Adenosylcobinamide-GDP ribazoletransferase (260 aa).

The next 7 helical transmembrane spans lie at 42-62 (PLAG…ANAI), 64-84 (LPPL…TGAL), 117-137 (FAAL…MAII), 144-164 (YALL…LAFW), 192-212 (GLGL…VALI), 214-234 (ALVL…AKIG), and 240-260 (TLGA…VMAL).

The protein belongs to the CobS family. Mg(2+) is required as a cofactor.

The protein resides in the cell inner membrane. The enzyme catalyses alpha-ribazole + adenosylcob(III)inamide-GDP = adenosylcob(III)alamin + GMP + H(+). The catalysed reaction is alpha-ribazole 5'-phosphate + adenosylcob(III)inamide-GDP = adenosylcob(III)alamin 5'-phosphate + GMP + H(+). The protein operates within cofactor biosynthesis; adenosylcobalamin biosynthesis; adenosylcobalamin from cob(II)yrinate a,c-diamide: step 7/7. Its function is as follows. Joins adenosylcobinamide-GDP and alpha-ribazole to generate adenosylcobalamin (Ado-cobalamin). Also synthesizes adenosylcobalamin 5'-phosphate from adenosylcobinamide-GDP and alpha-ribazole 5'-phosphate. This chain is Adenosylcobinamide-GDP ribazoletransferase, found in Brucella melitensis biotype 1 (strain ATCC 23456 / CCUG 17765 / NCTC 10094 / 16M).